The following is a 408-amino-acid chain: Lysosome-associated membrane glycoprotein 3 (408 aa).

Positions 1-20 (MPGQTSAVAVLLCLAVILHG) are cleaved as a signal peptide. The Lumenal portion of the chain corresponds to 21 to 373 (YQIREKEFPE…IVDECLSDYT (353 aa)). N55 and N225 each carry an N-linked (GlcNAc...) asparagine glycan. A disulfide bond links C230 and C267. Residue N284 is glycosylated (N-linked (GlcNAc...) asparagine). The cysteines at positions 331 and 368 are disulfide-linked. A helical transmembrane segment spans residues 374 to 394 (VVLPVVGIIVVVLCVVGLGIY). Topologically, residues 395–408 (KIRQRRQSSAYQRI) are cytoplasmic.

This sequence belongs to the LAMP family. Monomer. Interacts with FURIN.

It is found in the cell surface. It localises to the lysosome membrane. Its subcellular location is the cytoplasmic vesicle membrane. The protein resides in the early endosome membrane. In terms of biological role, lysosomal membrane glycoprotein which plays a role in the unfolded protein response (UPR) that contributes to protein degradation and cell survival during proteasomal dysfunction. Plays a role in the process of fusion of the lysosome with the autophagosome, thereby modulating the autophagic process. Promotes hepatocellular lipogenesis through activation of the PI3K/Akt pathway. May also play a role in dendritic cell function and in adaptive immunity. This Rattus norvegicus (Rat) protein is Lysosome-associated membrane glycoprotein 3 (Lamp3).